The chain runs to 327 residues: MAVPAKKRKMNFSEREVEIIVEELELKKHLLVNHFNAGVPLAAKSAAWHGILRRVNAVATCRRELPEVKKKWSDLKTEVRRKVAQVRAAVEGGEAPGPTEEDGAGGPGTGGGSGAGGPAVAPVLLTPMQQRICNLLGEATIISLPSTAEIHPVALGPTATAAAATVTLTQIPTETTYHTLEEGVVEYCTAEAPPPLPAEAPVEMMAQHADTSVKPQALKSRIALNSAKLIQEQRVTNLHVKEIAQHLEQQNDLLQMIRRSQEVQACAQERQAQAMEGTQAALSVLIQVLRPMIKDFRRYLQSNMPNPATASEPGQVAQNGQPDSIIQ.

The segment at 1 to 70 is required for nuclear localization and apoptosis-inducing activity; sequence MAVPAKKRKM…CRRELPEVKK (70 aa). The segment covering 88-98 has biased composition (low complexity); it reads AAVEGGEAPGP. Disordered regions lie at residues 88–118 and 303–327; these read AAVE…AGGP and NMPN…SIIQ. Positions 104-117 are enriched in gly residues; that stretch reads AGGPGTGGGSGAGG. Residues 316 to 327 are compositionally biased toward polar residues; sequence VAQNGQPDSIIQ.

Belongs to the NAIF1 family. Interacts with HARBI1.

It localises to the nucleus. In terms of biological role, induces apoptosis. The sequence is that of Nuclear apoptosis-inducing factor 1 (NAIF1) from Bos taurus (Bovine).